The primary structure comprises 547 residues: Chaperonin GroEL (547 aa).

ATP is bound by residues 30 to 33 (TLGP), Lys-51, 87 to 91 (DGTTT), Gly-415, and Asp-496.

It belongs to the chaperonin (HSP60) family. As to quaternary structure, forms a cylinder of 14 subunits composed of two heptameric rings stacked back-to-back. Interacts with the co-chaperonin GroES.

Its subcellular location is the cytoplasm. It carries out the reaction ATP + H2O + a folded polypeptide = ADP + phosphate + an unfolded polypeptide.. Its function is as follows. Together with its co-chaperonin GroES, plays an essential role in assisting protein folding. The GroEL-GroES system forms a nano-cage that allows encapsulation of the non-native substrate proteins and provides a physical environment optimized to promote and accelerate protein folding. This chain is Chaperonin GroEL, found in Haemophilus ducreyi (strain 35000HP / ATCC 700724).